A 568-amino-acid chain; its full sequence is Small ribosomal subunit protein bS1 (568 aa).

6 S1 motif domains span residues Lys-39 to Glu-100, Gly-118 to Arg-184, Gly-205 to Lys-273, Gly-290 to Lys-360, Gly-377 to Lys-447, and Gly-464 to Lys-533.

The protein belongs to the bacterial ribosomal protein bS1 family.

Functionally, binds mRNA; thus facilitating recognition of the initiation point. It is needed to translate mRNA with a short Shine-Dalgarno (SD) purine-rich sequence. In Rickettsia typhi (strain ATCC VR-144 / Wilmington), this protein is Small ribosomal subunit protein bS1 (rpsA).